Reading from the N-terminus, the 200-residue chain is Inner membrane-spanning protein YciB (200 aa).

5 consecutive transmembrane segments (helical) span residues 32-52 (FVATGAFMVAIVAAVIVSYVV), 56-76 (VPLMALVTAVIVLVFGGLTLV), 93-113 (LFAVTLYVGLMLGRSFIAILF), 126-146 (FLTIRWARFFLFMAVLNEVIW), and 153-173 (FWVAFKAFGVIPLTAVFAMTQ).

It belongs to the YciB family.

It localises to the cell inner membrane. In terms of biological role, plays a role in cell envelope biogenesis, maintenance of cell envelope integrity and membrane homeostasis. In Afipia carboxidovorans (strain ATCC 49405 / DSM 1227 / KCTC 32145 / OM5) (Oligotropha carboxidovorans), this protein is Inner membrane-spanning protein YciB.